A 718-amino-acid chain; its full sequence is MTSNDPVRRAETLREQIRYHNYRYYVLDEPVISDAEYDALMRELRELEAAHPELVTPDSPTQRVGAPPSEQFAKVQHVVPMLSLANAFDEAGMRAWYDRTLRLLGSDAQVAFVVEPKIDGLAVTLIYRNGVLVRGATRGDGEIGEDVTANLRTISSIPLRLGSFANDDSAPTNPTAVPPLLEVRGEVYMRIADFMRLNEQLAVAGEKVAANPRNAAAGSLRQKDPAVTSRRPLRFFAYGVGQVEGVALQTQWETLHFLRALGFPVNRDARRFERFEEALAYCREWMTRRDELEYEVDGVVVKIDSFAQQAELGVVGRDPRWAIAFKFPAREAVSRLLDIVVNVGRTGVITPNAVIEPVNIGGVTVRNASLHNADYIAERDIRIGDYVIVKRAGDVIPHIVGPVVARRDGSERVWQMPATCPACGTPLERAEGEVAYRCPNFGICPAQITRRIEHFVSRSAMDIAGIGEKQVQLFVERGWVQDVADLYTLTPEHFHGIEGYGPKRIANLLNAIAESKDRPLHRLIVGLGIRYVGEVVAQILADHFGSLDALAAASADEIDDLEGIGPAIAASVAEYFARPESKALIAKLKRVGVRTEAKGPAVAPKGDALAGKTFVITGTLPSMSREEAGALIVAHGGRVSGSVSKKTDYLVVGSEPGGTKVAKAQELGIPTLDEAGLLALIGANDRSAPAASNNNQNAASATSRGTMAEVQQLGLNLE.

NAD(+) is bound by residues 34 to 38, 83 to 84, and glutamate 115; these read DAEYD and SL. Catalysis depends on lysine 117, which acts as the N6-AMP-lysine intermediate. NAD(+) contacts are provided by arginine 138, glutamate 186, lysine 302, and lysine 326. Zn(2+) is bound by residues cysteine 420, cysteine 423, cysteine 438, and cysteine 444. Positions 604–694 constitute a BRCT domain; that stretch reads PKGDALAGKT…DRSAPAASNN (91 aa).

It belongs to the NAD-dependent DNA ligase family. LigA subfamily. Mg(2+) serves as cofactor. Requires Mn(2+) as cofactor.

It carries out the reaction NAD(+) + (deoxyribonucleotide)n-3'-hydroxyl + 5'-phospho-(deoxyribonucleotide)m = (deoxyribonucleotide)n+m + AMP + beta-nicotinamide D-nucleotide.. In terms of biological role, DNA ligase that catalyzes the formation of phosphodiester linkages between 5'-phosphoryl and 3'-hydroxyl groups in double-stranded DNA using NAD as a coenzyme and as the energy source for the reaction. It is essential for DNA replication and repair of damaged DNA. In Roseiflexus castenholzii (strain DSM 13941 / HLO8), this protein is DNA ligase.